Reading from the N-terminus, the 129-residue chain is Prefoldin subunit 6 (129 aa).

An N-acetylalanine modification is found at A2. The residue at position 21 (K21) is an N6-acetyllysine. K66 carries the post-translational modification N6-acetyllysine; alternate. K66 is covalently cross-linked (Glycyl lysine isopeptide (Lys-Gly) (interchain with G-Cter in SUMO1); alternate). K66 participates in a covalent cross-link: Glycyl lysine isopeptide (Lys-Gly) (interchain with G-Cter in SUMO2); alternate.

It belongs to the prefoldin subunit beta family. Heterohexamer of two PFD-alpha type and four PFD-beta type subunits. Component of the PAQosome complex which is responsible for the biogenesis of several protein complexes and which consists of R2TP complex members RUVBL1, RUVBL2, RPAP3 and PIH1D1, URI complex members PFDN2, PFDN6, PDRG1, UXT and URI1 as well as ASDURF, POLR2E and DNAAF10/WDR92.

Binds specifically to cytosolic chaperonin (c-CPN) and transfers target proteins to it. Binds to nascent polypeptide chain and promotes folding in an environment in which there are many competing pathways for nonnative proteins. The protein is Prefoldin subunit 6 (PFDN6) of Canis lupus familiaris (Dog).